Reading from the N-terminus, the 503-residue chain is Arabinose import ATP-binding protein AraG (503 aa).

2 consecutive ABC transporter domains span residues 5-240 and 253-497; these read LRFD…MVGR and LGDV…LPQG. 37–44 contributes to the ATP binding site; that stretch reads GENGAGKS.

The protein belongs to the ABC transporter superfamily. Arabinose importer (TC 3.A.1.2.2) family. The complex is composed of two ATP-binding proteins (AraG), two transmembrane proteins (AraH) and a solute-binding protein (AraF).

It is found in the cell inner membrane. The enzyme catalyses L-arabinose(out) + ATP + H2O = L-arabinose(in) + ADP + phosphate + H(+). Functionally, part of the ABC transporter complex AraFGH involved in arabinose import. Responsible for energy coupling to the transport system. The sequence is that of Arabinose import ATP-binding protein AraG from Burkholderia pseudomallei (strain K96243).